The primary structure comprises 339 residues: Glycerol-3-phosphate dehydrogenase [NAD(P)+] (339 aa).

Positions 15, 16, 36, and 110 each coordinate NADPH. K110, G139, and T141 together coordinate sn-glycerol 3-phosphate. An NADPH-binding site is contributed by A143. Positions 195, 248, 258, 259, and 260 each coordinate sn-glycerol 3-phosphate. K195 functions as the Proton acceptor in the catalytic mechanism. R259 serves as a coordination point for NADPH. NADPH is bound by residues V283 and E285.

Belongs to the NAD-dependent glycerol-3-phosphate dehydrogenase family.

Its subcellular location is the cytoplasm. The catalysed reaction is sn-glycerol 3-phosphate + NAD(+) = dihydroxyacetone phosphate + NADH + H(+). It catalyses the reaction sn-glycerol 3-phosphate + NADP(+) = dihydroxyacetone phosphate + NADPH + H(+). It functions in the pathway membrane lipid metabolism; glycerophospholipid metabolism. In terms of biological role, catalyzes the reduction of the glycolytic intermediate dihydroxyacetone phosphate (DHAP) to sn-glycerol 3-phosphate (G3P), the key precursor for phospholipid synthesis. The sequence is that of Glycerol-3-phosphate dehydrogenase [NAD(P)+] from Citrobacter koseri (strain ATCC BAA-895 / CDC 4225-83 / SGSC4696).